The following is a 309-amino-acid chain: Methionyl-tRNA formyltransferase (309 aa).

Position 107-110 (107-110 (SLLP)) interacts with (6S)-5,6,7,8-tetrahydrofolate.

This sequence belongs to the Fmt family.

It catalyses the reaction L-methionyl-tRNA(fMet) + (6R)-10-formyltetrahydrofolate = N-formyl-L-methionyl-tRNA(fMet) + (6S)-5,6,7,8-tetrahydrofolate + H(+). Attaches a formyl group to the free amino group of methionyl-tRNA(fMet). The formyl group appears to play a dual role in the initiator identity of N-formylmethionyl-tRNA by promoting its recognition by IF2 and preventing the misappropriation of this tRNA by the elongation apparatus. The protein is Methionyl-tRNA formyltransferase of Borrelia duttonii (strain Ly).